The primary structure comprises 146 residues: Large ribosomal subunit protein uL13 (146 aa).

This sequence belongs to the universal ribosomal protein uL13 family. As to quaternary structure, part of the 50S ribosomal subunit.

Functionally, this protein is one of the early assembly proteins of the 50S ribosomal subunit, although it is not seen to bind rRNA by itself. It is important during the early stages of 50S assembly. The polypeptide is Large ribosomal subunit protein uL13 (Borreliella burgdorferi (strain ATCC 35210 / DSM 4680 / CIP 102532 / B31) (Borrelia burgdorferi)).